Here is a 286-residue protein sequence, read N- to C-terminus: Energy-coupling factor transporter ATP-binding protein EcfA2 (286 aa).

Positions 3-246 (IRFDNVSYTY…KEKLADWHIG (244 aa)) constitute an ABC transporter domain. 40–47 (GQTGSGKS) contributes to the ATP binding site.

This sequence belongs to the ABC transporter superfamily. Energy-coupling factor EcfA family. In terms of assembly, forms a stable energy-coupling factor (ECF) transporter complex composed of 2 membrane-embedded substrate-binding proteins (S component), 2 ATP-binding proteins (A component) and 2 transmembrane proteins (T component).

It is found in the cell membrane. Its function is as follows. ATP-binding (A) component of a common energy-coupling factor (ECF) ABC-transporter complex. Unlike classic ABC transporters this ECF transporter provides the energy necessary to transport a number of different substrates. This Staphylococcus aureus (strain MRSA252) protein is Energy-coupling factor transporter ATP-binding protein EcfA2.